The primary structure comprises 302 residues: tRNA dimethylallyltransferase (302 aa).

21–28 lines the ATP pocket; that stretch reads GPTASGKS. Substrate is bound at residue 23–28; the sequence is TASGKS.

Belongs to the IPP transferase family. In terms of assembly, monomer. Mg(2+) is required as a cofactor.

It catalyses the reaction adenosine(37) in tRNA + dimethylallyl diphosphate = N(6)-dimethylallyladenosine(37) in tRNA + diphosphate. Catalyzes the transfer of a dimethylallyl group onto the adenine at position 37 in tRNAs that read codons beginning with uridine, leading to the formation of N6-(dimethylallyl)adenosine (i(6)A). In Paracoccus denitrificans (strain Pd 1222), this protein is tRNA dimethylallyltransferase.